Here is a 701-residue protein sequence, read N- to C-terminus: Coiled-coil domain-containing protein 62 (701 aa).

Coiled coils occupy residues E61–R197 and T241–N342. Residues K624–S652 form a disordered region. Residues P636–F648 are compositionally biased toward basic and acidic residues. 2 short sequence motifs (LXXLL motif) span residues L654 to L658 and L670 to L674.

As to quaternary structure, interacts with ESR1 and ESR2 in the presence of estradiol/E2. The interaction with ESR2 recruits CCDC62 to ER target genes, including cyclin-D1/CCND1 AP-1 promoter. Interacts with GOPC. In terms of tissue distribution, highly expressed in testis, not detected in other tissues (at protein level). Expressed at low levels in the epididymis, lung, spleen, bladder, kidney, liver, muscle.

The protein resides in the cytoplasm. The protein localises to the nucleus. It localises to the cytoplasmic vesicle. It is found in the secretory vesicle. Its subcellular location is the acrosome. Functionally, nuclear receptor coactivator that can enhance preferentially estrogen receptors ESR1 and ESR2 transactivation. Also modulates progesterone/PGR, glucocorticoid/NR3C1 and androgen/AR receptors transactivation, although at lower level; little effect on vitamin D receptor/VDR. Required for normal spermiogenesis. It probably plays a role in acrosome formation. The sequence is that of Coiled-coil domain-containing protein 62 (Ccdc62) from Mus musculus (Mouse).